Reading from the N-terminus, the 171-residue chain is Co-chaperone protein HscB (171 aa).

Residues 2 to 74 (DYFTLFGLPA…LTRAEYLLSL (73 aa)) form the J domain.

The protein belongs to the HscB family. In terms of assembly, interacts with HscA and stimulates its ATPase activity. Interacts with IscU.

Co-chaperone involved in the maturation of iron-sulfur cluster-containing proteins. Seems to help targeting proteins to be folded toward HscA. This Klebsiella pneumoniae subsp. pneumoniae (strain ATCC 700721 / MGH 78578) protein is Co-chaperone protein HscB.